The sequence spans 166 residues: NAD(P)H-quinone oxidoreductase subunit I, chloroplastic (166 aa).

2 consecutive 4Fe-4S ferredoxin-type domains span residues 55-84 and 95-124; these read GRIH…VDWK and LNYS…MTEE. The [4Fe-4S] cluster site is built by C64, C67, C70, C74, C104, C107, C110, and C114.

This sequence belongs to the complex I 23 kDa subunit family. As to quaternary structure, NDH is composed of at least 16 different subunits, 5 of which are encoded in the nucleus. The cofactor is [4Fe-4S] cluster.

The protein resides in the plastid. It is found in the chloroplast thylakoid membrane. The enzyme catalyses a plastoquinone + NADH + (n+1) H(+)(in) = a plastoquinol + NAD(+) + n H(+)(out). It carries out the reaction a plastoquinone + NADPH + (n+1) H(+)(in) = a plastoquinol + NADP(+) + n H(+)(out). Functionally, NDH shuttles electrons from NAD(P)H:plastoquinone, via FMN and iron-sulfur (Fe-S) centers, to quinones in the photosynthetic chain and possibly in a chloroplast respiratory chain. The immediate electron acceptor for the enzyme in this species is believed to be plastoquinone. Couples the redox reaction to proton translocation, and thus conserves the redox energy in a proton gradient. The sequence is that of NAD(P)H-quinone oxidoreductase subunit I, chloroplastic from Laphamia lindheimeri (Lindheimer's rockdaisy).